The following is a 154-amino-acid chain: Ribonuclease HI (154 aa).

One can recognise an RNase H type-1 domain in the interval 1-142; sequence MPKQIEIFTD…CDELAKKGAE (142 aa). Positions 10, 48, 70, and 134 each coordinate Mg(2+).

The protein belongs to the RNase H family. Monomer. Requires Mg(2+) as cofactor.

It localises to the cytoplasm. The catalysed reaction is Endonucleolytic cleavage to 5'-phosphomonoester.. In terms of biological role, endonuclease that specifically degrades the RNA of RNA-DNA hybrids. The protein is Ribonuclease HI (rnhA) of Haemophilus influenzae (strain ATCC 51907 / DSM 11121 / KW20 / Rd).